Consider the following 1034-residue polypeptide: DNA polymerase I B, chloroplastic/mitochondrial (1034 aa).

Residues 1–55 constitute a chloroplast and mitochondrion transit peptide; the sequence is MGVSLRHLSPSSFWVSRRPRVSSSILSFLVPRRRILCTRKVAIIKGNAGYSTATD. Positions 270-468 constitute a 3'-5' exonuclease domain; that stretch reads ACDTEVSRID…LYESMKKQLQ (199 aa). Residues 700–1030 are polymerase; that stretch reads HAIAALCEVC…SVDAKCAQNW (331 aa).

The protein belongs to the DNA polymerase type-A family. As to expression, expressed in shoot apical meristem.

It localises to the mitochondrion. The protein localises to the plastid. The protein resides in the chloroplast. It catalyses the reaction DNA(n) + a 2'-deoxyribonucleoside 5'-triphosphate = DNA(n+1) + diphosphate. Its activity is regulated as follows. Not inhibited by aphidicolin. Functionally, in addition to polymerase activity, this DNA polymerase exhibits 5'-3' exonuclease activity. Required for DNA replication and accumulation in plastids and mitochondria. This chain is DNA polymerase I B, chloroplastic/mitochondrial (POLIB), found in Arabidopsis thaliana (Mouse-ear cress).